A 1610-amino-acid chain; its full sequence is NHS-like protein 1 (1610 aa).

Ser-24 is modified (phosphoserine). The disordered stretch occupies residues 145–169 (SPFCDDYQDEDEETDQKCSLSSSEE). Ser-198 and Ser-328 each carry phosphoserine. A compositionally biased stretch (polar residues) spans 433–448 (TAQSAGQRESKSSGSS). Disordered regions lie at residues 433 to 477 (TAQS…HWNE) and 531 to 602 (PAHP…DAGS). Ser-568 carries the post-translational modification Phosphoserine. Residues 578 to 594 (GYSTPTSNMSSCSLDQT) show a composition bias toward polar residues. Phosphoserine is present on Ser-639. Positions 649 to 667 (QKNQGDRSNYQDKSLSRNI) are enriched in polar residues. 5 disordered regions span residues 649 to 693 (QKNQ…KKSS), 715 to 778 (SLPG…SVKS), 791 to 981 (TGMQ…PPPE), 997 to 1535 (PRPA…GEGE), and 1566 to 1610 (EGGL…SEES). A compositionally biased stretch (low complexity) spans 715 to 730 (SLPGKSGSSPSQSPCS). 3 stretches are compositionally biased toward polar residues: residues 740–760 (SRSQSTVSAGSSMTSATTPNV), 767–778 (TPSQSDTSSVKS), and 851–865 (SPSSGYSSQSNTPTA). A compositionally biased stretch (low complexity) spans 895–928 (SLISSVSISSSSTSLSSSTSTEGSGTMKKLDPAV). Pro residues-rich tracts occupy residues 929–946 (GSPPAPPPPPVPSPPFPC) and 970–981 (PHSPVFPPPPPE). Positions 1001-1011 (LSPILPDSPVS) are enriched in low complexity. Residues 1012–1031 (LPLPPPLLPSSEPPPAPPLD) are compositionally biased toward pro residues. Over residues 1041-1053 (PFTNSGQPESSRG) the composition is skewed to polar residues. Ser-1089 bears the Phosphoserine mark. Over residues 1122–1153 (SRNSTNEMESESQPASVTSSLPTPAKSSSQGD) the composition is skewed to polar residues. Ser-1167 carries the phosphoserine modification. Residues 1180 to 1193 (PSPSTTPLPDSSPS) are compositionally biased toward low complexity. Phosphoserine is present on Ser-1233. Composition is skewed to basic and acidic residues over residues 1240-1249 (GSVHSREAKE) and 1373-1383 (GRRDSDDDHSR). A phosphoserine mark is found at Ser-1386 and Ser-1388. Thr-1392 bears the Phosphothreonine mark. Residues 1405–1422 (QVGSIQRSIRKSSTSSDN) show a composition bias toward polar residues. A compositionally biased stretch (basic and acidic residues) spans 1447-1460 (KNTDPRFQRSRSEP). 2 stretches are compositionally biased toward low complexity: residues 1461-1474 (SPDAPESPSSCSPS) and 1504-1516 (SRTPPSAASSRYS).

This sequence belongs to the NHS family. In terms of tissue distribution, widely expressed. Expressed in adult and fetal brain, fetal eyes, adult lens, kidney, liver and intestine.

The protein is NHS-like protein 1 (NHSL1) of Homo sapiens (Human).